We begin with the raw amino-acid sequence, 148 residues long: Deoxyuridine 5'-triphosphate nucleotidohydrolase (148 aa).

Substrate contacts are provided by residues 67–69, Asn-80, 84–86, and Met-94; these read RSG and LID.

The protein belongs to the dUTPase family. Mg(2+) is required as a cofactor.

It catalyses the reaction dUTP + H2O = dUMP + diphosphate + H(+). The protein operates within pyrimidine metabolism; dUMP biosynthesis; dUMP from dCTP (dUTP route): step 2/2. This enzyme is involved in nucleotide metabolism: it produces dUMP, the immediate precursor of thymidine nucleotides and it decreases the intracellular concentration of dUTP so that uracil cannot be incorporated into DNA. This chain is Deoxyuridine 5'-triphosphate nucleotidohydrolase, found in Burkholderia lata (strain ATCC 17760 / DSM 23089 / LMG 22485 / NCIMB 9086 / R18194 / 383).